Here is a 348-residue protein sequence, read N- to C-terminus: Dihydroorotate dehydrogenase (quinone) (348 aa).

Residues 60-64 (AGFDK) and T84 each bind FMN. K64 serves as a coordination point for substrate. A substrate-binding site is contributed by 109 to 113 (NRLGF). N138 and N169 together coordinate FMN. N169 is a binding site for substrate. Catalysis depends on S172, which acts as the Nucleophile. N174 is a substrate binding site. Residues K207 and S235 each contribute to the FMN site. A substrate-binding site is contributed by 236-237 (NT). FMN-binding positions include G258, G287, and 308-309 (YS).

This sequence belongs to the dihydroorotate dehydrogenase family. Type 2 subfamily. In terms of assembly, monomer. The cofactor is FMN.

It localises to the cell membrane. It carries out the reaction (S)-dihydroorotate + a quinone = orotate + a quinol. Its pathway is pyrimidine metabolism; UMP biosynthesis via de novo pathway; orotate from (S)-dihydroorotate (quinone route): step 1/1. Its function is as follows. Catalyzes the conversion of dihydroorotate to orotate with quinone as electron acceptor. This chain is Dihydroorotate dehydrogenase (quinone), found in Parvibaculum lavamentivorans (strain DS-1 / DSM 13023 / NCIMB 13966).